A 278-amino-acid chain; its full sequence is Inosose isomerase (278 aa).

A divalent metal cation contacts are provided by Glu142, Asp174, His200, and Glu246.

It belongs to the IolI family. It depends on a divalent metal cation as a cofactor.

The enzyme catalyses scyllo-inosose = scyllo-inosine. It participates in polyol metabolism; myo-inositol degradation into acetyl-CoA. In terms of biological role, involved in the reversible interconverion of 2-keto-myo-inositol (2KMI, inosose or 2,4,6/3,5-pentahydroxycyclohexanone) to 1-keto-D-chiro-inositol (1KDCI or 2,3,5/4,6-pentahydroxycyclohexanone). This chain is Inosose isomerase (iolI), found in Bacillus licheniformis (strain ATCC 14580 / DSM 13 / JCM 2505 / CCUG 7422 / NBRC 12200 / NCIMB 9375 / NCTC 10341 / NRRL NRS-1264 / Gibson 46).